We begin with the raw amino-acid sequence, 420 residues long: DNA replication and repair protein RecF (420 aa).

30-37 (GRNGQGKT) contacts ATP. The interval 175-214 (RKGGFARKGGFAPLGPPEGRPEGPPEGRTGGSATSGPPSR) is disordered.

The protein belongs to the RecF family.

It is found in the cytoplasm. In terms of biological role, the RecF protein is involved in DNA metabolism; it is required for DNA replication and normal SOS inducibility. RecF binds preferentially to single-stranded, linear DNA. It also seems to bind ATP. The polypeptide is DNA replication and repair protein RecF (Nocardioides sp. (strain ATCC BAA-499 / JS614)).